Consider the following 118-residue polypeptide: Cycloviolacin-O11 (118 aa).

The first 22 residues, 1–22 (MEMKNMVVGLFLIAAFALPALA), serve as a signal peptide directing secretion. The propeptide occupies 23 to 84 (TSFEKDFITH…THSNSINALG (62 aa)). Residues 85 to 115 (GTLPCGESCVWIPCISAVVGCSCKSKVCYKN) constitute a cross-link (cyclopeptide (Gly-Asn)). 3 disulfide bridges follow: cysteine 89-cysteine 105, cysteine 93-cysteine 107, and cysteine 98-cysteine 112. The propeptide occupies 116-118 (SLA).

In terms of processing, cycloviolacin-O11 is a cyclic peptide. In terms of tissue distribution, expressed in leaves, petals and petioles but not in roots and runners (at protein level).

Probably participates in a plant defense mechanism. The chain is Cycloviolacin-O11 (Voc2) from Viola odorata (Sweet violet).